The chain runs to 475 residues: Glycogen synthase (475 aa).

K15 contacts ADP-alpha-D-glucose.

The protein belongs to the glycosyltransferase 1 family. Bacterial/plant glycogen synthase subfamily.

It carries out the reaction [(1-&gt;4)-alpha-D-glucosyl](n) + ADP-alpha-D-glucose = [(1-&gt;4)-alpha-D-glucosyl](n+1) + ADP + H(+). Its pathway is glycan biosynthesis; glycogen biosynthesis. In terms of biological role, synthesizes alpha-1,4-glucan chains using ADP-glucose. This Anaeromyxobacter dehalogenans (strain 2CP-C) protein is Glycogen synthase.